The chain runs to 482 residues: Nicotine dehydrogenase (482 aa).

A signal peptide (tat-type signal) is located at residues 1–38 (MSDKTKTNEGFSRRSFIGSAAVVTAGVAGLGAIDAASA). Alanine 64, glutamate 83, alanine 84, arginine 85, arginine 91, tryptophan 108, and valine 279 together coordinate FAD. (S)-nicotine is bound at residue threonine 381. FAD contacts are provided by alanine 453, asparagine 462, and isoleucine 463.

It belongs to the flavin monoamine oxidase family. Monomer in solution. Homodimer in solution. Forms homodimers in the crystal. It depends on FAD as a cofactor. Post-translationally, predicted to be exported by the Tat system. The position of the signal peptide cleavage has not been experimentally proven.

It is found in the periplasm. The enzyme catalyses (S)-nicotine + 2 Fe(III)-[cytochrome c] = N-methylmyosmine + 2 Fe(II)-[cytochrome c] + 2 H(+). It participates in alkaloid degradation; nicotine degradation. With respect to regulation, the catalytic rate is not significantly affected by pH. In terms of biological role, involved in nicotine degradation. Catalyzes the conversion of nicotine to N-methylmyosmine. N-methylmyosmine undergoes spontaneous hydrolysis to form pseudooxynicotine (PN). S-nicotine is the optimal substrate. Has lower activity with some nicotine analogs, but shows no activity towards neurotransmitters, including serotonin, dopamine, and norepinephrine, nicotine metabolites and common neuroactive drugs. The enzyme is stereospecific with poor activity with (R)-nicotine as the substrate. The c-type cytochrome protein CycN is the physiological electron acceptor. O(2) is a poor electron acceptor. The sequence is that of Nicotine dehydrogenase from Pseudomonas putida (strain DSM 28022 / S16).